A 1407-amino-acid polypeptide reads, in one-letter code: E3 ubiquitin-protein ligase linker protein MMS1 (1407 aa).

Residues 1–600 (MLGLRTHGLD…QFQIFRHLRI (600 aa)) form a required for interaction with MMS22 region. Phosphothreonine is present on Thr-1294.

As to quaternary structure, component of multiple cullin-RING ligases (CRLs) composed of 4 subunits: the RING protein HRT1, the cullin RTT101, a linker protein MMS1, and one of many alternative substrate receptors belonging to a protein family described as DCAF (DDB1- and CUL4-associated factor). Component of a RTT101(MMS1-MMS22) complex with the substrate receptor MMS22. This complex further interacts with RTT107 and CTF4 to form RTT101-MMS1-MMS22-RTT107 and RTT101-MMS1-MMS22-CTF4 complexes respectively. Component of a RTT101(MSS1-CRT10) complex with the substrate receptor CRT10. Component of a RTT101(MSS1-ESC2) complex with the potential substrate receptor ESC2. Component of a RTT101(MSS1-ORC5) complex with the potential substrate receptor ORC5. Interacts with RTT101 (via N-ter). Interacts (via N-ter) with MMS22 (via C-ter). Interacts with CRT10.

Its subcellular location is the nucleus. Functionally, component of multiple cullin-RING-based E3 ubiquitin-protein ligase complexes (CRLs), which mediate the ubiquitination of target proteins. The CRL associates with CDC34 as the E2 ubiquitin-conjugating enzyme. The functional specificity of the CRL depends on the type of the associated substrate receptor protein. RTT101(MMS1-MMS22) promotes fork progression through damaged DNA or natural pause sites by stabilizing replication proteins like the replication fork-pausing complex (FPC) and leading-strand polymerase at stalled replication forks. RTT101(MMS1-MMS22) ubiquitinates the acetylated histones H3K56ac-H4 at lysine residues H3K121, H3K122 and H3K125. Ubiquitination is required for efficient histone deposition during replication-coupled nucleosome assembly, probably by facilitating the transfer of H3-H4 from ASF1 to other chaperones involved in histone deposition. RTT101(MMS1-CRT10) may regulate nucleotide synthesis through transcriptional regulation of ribonucleotide reductase. RTT101(MMS1) is also involved in the non-functional rRNA decay (NRD) of 25S rRNA through the selective, ubiquitination-dependent degradation of nonfunctional ribosomal particles. Involved in the regulation of TY1 transposition. The polypeptide is E3 ubiquitin-protein ligase linker protein MMS1 (MMS1) (Saccharomyces cerevisiae (strain ATCC 204508 / S288c) (Baker's yeast)).